Here is a 138-residue protein sequence, read N- to C-terminus: Histone H3 (138 aa).

Residues 1–49 form a disordered region; it reads MARTKQTARKSTGGKAPRKQLATKAARKQAPSQVSGGVKKPHRYRPGTV. The residue at position 5 (Lys-5) is an N6,N6,N6-trimethyllysine; alternate. Residue Lys-5 is modified to N6,N6-dimethyllysine; alternate. 2 positions are modified to N6-methyllysine; alternate: Lys-5 and Lys-10. The residue at position 10 (Lys-10) is an N6-acetyllysine; alternate. Phosphoserine is present on Ser-11. Lys-15 carries the N6,N6-dimethyllysine; alternate modification. N6-methyllysine; alternate is present on residues Lys-15, Lys-19, Lys-24, Lys-28, and Lys-39. An N6-acetyllysine; alternate mark is found at Lys-15, Lys-19, Lys-24, Lys-28, and Lys-39. An N6,N6,N6-trimethyllysine; alternate mark is found at Lys-28 and Lys-39. N6,N6-dimethyllysine; alternate occurs at positions 28 and 39. An N6-acetyllysine mark is found at Lys-59 and Lys-67. An N6,N6,N6-trimethyllysine; alternate modification is found at Lys-82. Position 82 is an N6,N6-dimethyllysine; alternate (Lys-82). Residue Lys-82 is modified to N6-methyllysine; alternate.

The protein belongs to the histone H3 family. In terms of assembly, the nucleosome is a histone octamer containing two molecules each of H2A, H2B, H3 and H4 assembled in one H3-H4 heterotetramer and two H2A-H2B heterodimers. The octamer wraps approximately 147 bp of DNA. Phosphorylated to form H3S10ph. H3S10ph promotes subsequent H3K14ac formation and is required for transcriptional activation through TBP recruitment to the promoters. Post-translationally, mono-, di- and trimethylated by the COMPASS complex to form H3K4me1/2/3. H3K4me activates gene expression by regulating transcription elongation and plays a role in telomere length maintenance. H3K4me enrichment correlates with transcription levels, and occurs in a 5' to 3' gradient with H3K4me3 enrichment at the 5'-end of genes, shifting to H3K4me2 and then H3K4me1. Methylated by SET2 to form H3K36me. H3K36me represses gene expression. Methylated by DOT1 to form H3K79me. H3K79me is required for association of SIR proteins with telomeric regions and for telomeric silencing. The COMPASS-mediated formation of H3K4me2/3 and the DOT1-mediated formation of H3K79me require H2BK123ub1. In terms of processing, acetylation of histone H3 leads to transcriptional activation. H3K14ac formation by GCN5 is promoted by H3S10ph. H3K14ac can also be formed by ESA1. H3K56ac formation occurs predominantly in newly synthesized H3 molecules during G1, S and G2/M of the cell cycle and may be involved in DNA repair.

It localises to the nucleus. The protein localises to the chromosome. In terms of biological role, core component of nucleosome. Nucleosomes wrap and compact DNA into chromatin, limiting DNA accessibility to the cellular machineries which require DNA as a template. Histones thereby play a central role in transcription regulation, DNA repair, DNA replication and chromosomal stability. DNA accessibility is regulated via a complex set of post-translational modifications of histones, also called histone code, and nucleosome remodeling. The sequence is that of Histone H3 (HHT1) from Cryptococcus neoformans var. neoformans serotype D (strain B-3501A) (Filobasidiella neoformans).